The chain runs to 466 residues: Catalase ifgD (466 aa).

Residues M1–S22 are disordered. H48 is an active-site residue. A heme-binding site is contributed by Y337.

The protein belongs to the catalase family. It depends on heme as a cofactor.

Its pathway is alkaloid biosynthesis; ergot alkaloid biosynthesis. Catalase; part of the gene cluster that mediates the biosynthesis of isofumigaclavines, fungal ergot alkaloids. The tryptophan dimethylallyltransferase ifgA catalyzes the first step of ergot alkaloid biosynthesis by condensing dimethylallyl diphosphate (DMAP) and tryptophan to form 4-dimethylallyl-L-tryptophan. The second step is catalyzed by the methyltransferase ifgB that methylates 4-dimethylallyl-L-tryptophan in the presence of S-adenosyl-L-methionine, resulting in the formation of N-methyl-dimethylallyl-L-tryptophan. The catalase ifgD and the FAD-dependent oxidoreductase ifgC then transform N-methyl-dimethylallyl-L-tryptophan to chanoclavine-I which is further oxidized by ifgE in the presence of NAD(+), resulting in the formation of chanoclavine-I aldehyde. The chanoclavine-I aldehyde reductases ifgG and/or fgaOx3 reduce chanoclavine-I aldehyde to dihydrochanoclavine-I aldehyde that spontaneously dehydrates to form 6,8-dimethyl-6,7-didehydroergoline. The festuclavine dehydrogenases ifgF1 and/or ifgF2 then catalyze the reduction of 6,8-dimethyl-6,7-didehydroergoline to form festuclavine. Hydrolysis of festuclavine by a yet undetermined cytochrome P450 monooxygenase (called ifgH) then leads to the formation of isofumigaclavine B which is in turn acetylated by ifgI to isofumigaclavine A. Penicillium roqueforti has interestingly at least two sets of genes for the consumption of chanoclavine-I aldehyde on three different loci, the OYEs ifgG/fgaOx3 and the festuclavine synthase homologs ifgF1/ifgF2. The reason for the duplication of these genes is unclear, probably to ensure the conversion of chanoclavine-I aldehyde by differential gene expression under various environmental conditions. The sequence is that of Catalase ifgD from Penicillium roqueforti (strain FM164).